The sequence spans 256 residues: Inner membrane transport permease YadH (256 aa).

Residues 1-22 (MMHLYWVALKSIWAKEIHRFMR) are Periplasmic-facing. The ABC transmembrane type-2 domain maps to 22–251 (RIWVQTLVPP…LICWSLIQRG (230 aa)). Residues 23–43 (IWVQTLVPPVITMTLYFIIFG) form a helical membrane-spanning segment. At 44-52 (NLIGSRIGD) the chain is on the cytoplasmic side. The chain crosses the membrane as a helical span at residues 53-73 (MHGFSYMQFIVPGLIMMSVIT). Topologically, residues 74–94 (NAYANVASSFFGAKFQRNIEE) are periplasmic. The helical transmembrane segment at 95 to 115 (LLVAPVPTHVIIAGYVGGGVA) threads the bilayer. A topological domain (cytoplasmic) is located at residue Arg116. Residues 117–137 (GLFVGILVTAISLFFVPFQVH) traverse the membrane as a helical segment. A topological domain (periplasmic) is located at residue Ser138. A helical transmembrane segment spans residues 139–159 (WVFVALTLVLTAVLFSLAGLL). At 160 to 169 (NGVFAKTFDD) the chain is on the cytoplasmic side. The helical transmembrane segment at 170–190 (ISLVPTFVLTPLTYLGGVFYS) threads the bilayer. Residues 191-223 (LTLLPPFWQGLSHLNPIVYMISGFRYGFLGIND) are Periplasmic-facing. The helical transmembrane segment at 224-244 (VPLVTTFGVLVVFIVAFYLIC) threads the bilayer. At 245–256 (WSLIQRGRGLRS) the chain is on the cytoplasmic side.

It belongs to the ABC-2 integral membrane protein family.

The protein resides in the cell inner membrane. The chain is Inner membrane transport permease YadH (yadH) from Escherichia coli O157:H7.